A 447-amino-acid chain; its full sequence is Multicopper oxidase mco (447 aa).

The segment covering methionine 1–asparagine 25 has biased composition (basic and acidic residues). A disordered region spans residues methionine 1–proline 43. Cu cation is bound by residues histidine 107, histidine 109, histidine 147, histidine 149, histidine 375, histidine 378, histidine 380, histidine 428, cysteine 429, histidine 430, histidine 434, and methionine 439.

It belongs to the multicopper oxidase family. Requires Cu cation as cofactor.

It is found in the cytoplasm. May be involved in copper homeostasis and oxidative stress response. Oxidizes the substrate 3,3'-dimethoxybenzidine in vitro. Also possesses low levels of phenoloxidase and ferroxidase activities. The chain is Multicopper oxidase mco (mco) from Staphylococcus aureus.